Here is a 103-residue protein sequence, read N- to C-terminus: Truncated secreted TNF-receptor-like protein A53R (103 aa).

A TNFR-Cys 1 repeat occupies 36 to 73 (SCDKGEYLDKRHNQCCNRCPPGEFAKVRCNGNDNTKCE). Cystine bridges form between Cys37–Cys50, Cys51–Cys64, and Cys54–Cys72. Residues 74-103 (RCPPHTYTTIPIILMDVINVENAQPDHLIR) form a TNFR-Cys 2; truncated repeat.

The protein belongs to the poxviridae A53R protein family.

The polypeptide is Truncated secreted TNF-receptor-like protein A53R (Vaccinia virus (strain Western Reserve) (VACV)).